A 189-amino-acid polypeptide reads, in one-letter code: Small heat shock protein 21 (189 aa).

Residues 26–53 (PPNFNPRKIAQGDNGKGQQVSRYGAGAG) are disordered. In terms of domain architecture, sHSP spans 77 to 183 (KYFVGFDDNV…HEKIVNIPIS (107 aa)).

Belongs to the small heat shock protein (HSP20) family.

Functionally, heat shock protein required for pathogenicity. Mediates thermotolerance and adaptation to oxidative stress and ethanol-induced stress. Required for invasive growth and filament formation under various filament inducing conditions. Plays a role in the capacity of damaging human-derived endothelial and oral epithelial cells during infection. Potentiates resistance to antifungal drugs, as well as resistance to killing by human neutrophils. Plays a major role in trehalose homeostasis in response to elevated temperatures. Regulates CEK1 activation by phosphorylation in response to elevated temperatures. This chain is Small heat shock protein 21 (HSP21), found in Candida albicans (strain SC5314 / ATCC MYA-2876) (Yeast).